Here is a 439-residue protein sequence, read N- to C-terminus: 23S rRNA (uracil(1939)-C(5))-methyltransferase RlmD (439 aa).

One can recognise a TRAM domain in the interval 1 to 54 (MTAPVLIESLDQEGRGVAHAEGKVIFIEGALPGEVVTYNAYRRKPSFELAQVGQ). [4Fe-4S] cluster is bound by residues C67, C73, C76, and C155. S-adenosyl-L-methionine is bound by residues Q264, F293, N298, E314, N342, and D363. The active-site Nucleophile is C391.

This sequence belongs to the class I-like SAM-binding methyltransferase superfamily. RNA M5U methyltransferase family. RlmD subfamily.

It carries out the reaction uridine(1939) in 23S rRNA + S-adenosyl-L-methionine = 5-methyluridine(1939) in 23S rRNA + S-adenosyl-L-homocysteine + H(+). In terms of biological role, catalyzes the formation of 5-methyl-uridine at position 1939 (m5U1939) in 23S rRNA. This is 23S rRNA (uracil(1939)-C(5))-methyltransferase RlmD from Nitrosospira multiformis (strain ATCC 25196 / NCIMB 11849 / C 71).